We begin with the raw amino-acid sequence, 944 residues long: Respiratory burst oxidase homolog protein F (944 aa).

The Cytoplasmic segment spans residues 2-387; sequence KPFSKNDRRR…VYIMQENWKR (386 aa). Coiled-coil stretches lie at residues 102–126 and 157–184; these read QFSQ…KRFS and LEAR…RGLR. EF-hand-like regions lie at residues 207-215 and 241-252; these read EKNGYIYRS and RRLKVEKINHDE. EF-hand domains are found at residues 264-299 and 308-343; these read SFDS…SASA and QAEE…KDTY. Residues Asp-277, Asn-279, Asp-281, Arg-283, Glu-288, Asp-321, and Tyr-327 each coordinate Ca(2+). Residues Ser-354 and Ser-358 each carry the phosphoserine modification. A helical transmembrane segment spans residues 388 to 408; that stretch reads IWVLSLWIMIMIGLFLWKFFQ. Residues 409–475 lie on the Extracellular side of the membrane; the sequence is YKQKDAFHVM…INFHKTIAGA (67 aa). In terms of domain architecture, Ferric oxidoreductase spans 426 to 583; it reads KGAAETLKFN…LFVIVYILLI (158 aa). Residues 476 to 492 form a helical membrane-spanning segment; that stretch reads IVVAVILHIGDHLACDF. The Cytoplasmic segment spans residues 493-527; sequence PRIVRATEYDYNRYLFHYFQTKQPTYFDLVKGPEG. A helical membrane pass occupies residues 528–548; it reads ITGILMVILMIISFTLATRWF. The Extracellular portion of the chain corresponds to 549–570; the sequence is RRNLVKLPKPFDRLTGFNAFWY. Residues 571–591 traverse the membrane as a helical segment; it reads SHHLFVIVYILLILHGIFLYF. At 592–599 the chain is on the cytoplasmic side; the sequence is AKPWYVRT. The helical transmembrane segment at 600-617 threads the bilayer; the sequence is TWMYLAVPVLLYGGERTL. The Extracellular portion of the chain corresponds to 618–744; the sequence is RYFRSGSYSV…PYGAPAQDYR (127 aa). The FAD-binding FR-type domain maps to 622-742; that stretch reads SGSYSVRLLK…DGPYGAPAQD (121 aa). Residues 745–765 form a helical membrane-spanning segment; sequence KYDVLLLVGLGIGATPFISIL. Residues 766 to 944 are Cytoplasmic-facing; that stretch reads KDLLNNIVKM…TKFEFHKEHF (179 aa).

It belongs to the RBOH (TC 5.B.1.3) family. As to quaternary structure, monomer and homodimer. Interacts (via N-terminus) with CIPK26. Interacts (via N-terminus) with SRC2. Not glycosylated. Phosphorylated by CIPK26. Expressed in roots, stems, seedlings, inflorescences, leaves and guard cells.

It localises to the cell membrane. Inhibited by diphenylene iodonium (DPI). In terms of biological role, calcium-dependent NADPH oxidase that generates superoxide. Generates reactive oxygen species (ROS) during incompatible interactions with pathogens and is important in the regulation of the hypersensitive response (HR). Involved in abscisic acid-induced stomatal closing and in UV-B and abscisic acid ROS-dependent signaling. In Arabidopsis thaliana (Mouse-ear cress), this protein is Respiratory burst oxidase homolog protein F (RBOHF).